A 403-amino-acid polypeptide reads, in one-letter code: Deubiquitinase and deneddylase Dub1 (403 aa).

The segment covering 1–11 has biased composition (polar residues); it reads MLSPTNSTSKT. Residues 1 to 24 form a disordered region; sequence MLSPTNSTSKTAPVPPRDSSKPVL. The chain crosses the membrane as a helical span at residues 40–60; that stretch reads TALAVLLVVVTLGLILLFYSF. Residues 77–132 are disordered; the sequence is KEQPTISIPVPLPSPPLAVPRPSTPPAPTPAISRPSTPSAPKPSTPPPLLPKAPKP. Composition is skewed to pro residues over residues 86-105 and 114-130; these read VPLPSPPLAVPRPSTPPAPT and PSAPKPSTPPPLLPKAP. Residues His277, Asp294, and Cys347 contribute to the active site.

Belongs to the peptidase C48 family.

The protein localises to the secreted. It localises to the host cell. It is found in the membrane. Effector proteins function to alter host cell physiology and promote bacterial survival in host tissues. This protease possesses deubiquitinating and deneddylating activities. This is Deubiquitinase and deneddylase Dub1 (cdu1) from Chlamydia trachomatis serovar L2b (strain UCH-1/proctitis).